Here is a 673-residue protein sequence, read N- to C-terminus: Probable potassium transport system protein Kup 1 (673 aa).

The next 13 membrane-spanning stretches (helical) occupy residues 14-34 (GAGFIIAMGIVYGDIGTSPLY), 58-78 (LSLIIWTLTLITTVKYVWIAL), 101-121 (WLIIPAMIGGAALLSDGALTP), 147-167 (LPIVIITLAILAILFLIQRFG), 175-195 (FGPVMFIWFSFFGITGLINLF), 196-216 (GDFSVLQAINPYWAIHLLLSP), 220-240 (AGIFVLGSVFLATTGAEALYS), 252-272 (VSWPFVKVCIILSYCGQAAWL), 294-314 (LIIFSVILATLAAIIASQALI), 345-365 (LYIPAVNLGLWLAASFIVVYF), 374-394 (AYGLAITVTMLMTTILLTVYL), 403-423 (VFVVLFFGAFIFIEGLFFAAS), and 427-447 (FLHGGYVVVILAALILFVMAI).

The protein belongs to the HAK/KUP transporter (TC 2.A.72) family.

The protein resides in the cell membrane. The enzyme catalyses K(+)(in) + H(+)(in) = K(+)(out) + H(+)(out). In terms of biological role, transport of potassium into the cell. Likely operates as a K(+):H(+) symporter. The polypeptide is Probable potassium transport system protein Kup 1 (Lactococcus lactis subsp. cremoris (strain SK11)).